A 145-amino-acid chain; its full sequence is Protein SPMIP3 (145 aa).

This chain is Protein SPMIP3, found in Mus musculus (Mouse).